The sequence spans 442 residues: Large ribosomal subunit protein mL65 (442 aa).

It belongs to the mitochondrion-specific ribosomal protein mL65 family. In terms of assembly, component of the mitochondrial ribosome small subunit (28S) which comprises a 12S rRNA and about 30 distinct proteins.

Its subcellular location is the mitochondrion. The polypeptide is Large ribosomal subunit protein mL65 (Mrps30) (Mus musculus (Mouse)).